A 634-amino-acid polypeptide reads, in one-letter code: CRISPR-associated protein MJ1674 (634 aa).

CRISPR (clustered regularly interspaced short palindromic repeat) is an adaptive immune system that provides protection against mobile genetic elements (viruses, transposable elements and conjugative plasmids). CRISPR clusters contain spacers, sequences complementary to antecedent mobile elements, and target invading nucleic acids. CRISPR clusters are transcribed and processed into CRISPR RNA (crRNA). The type III Csm effector complex binds crRNA and acts as a crRNA-guided RNase, DNase and cyclic oligoadenylate synthase; binding of target RNA cognate to the crRNA is required for all activities. In Methanocaldococcus jannaschii (strain ATCC 43067 / DSM 2661 / JAL-1 / JCM 10045 / NBRC 100440) (Methanococcus jannaschii), this protein is CRISPR-associated protein MJ1674.